The following is a 277-amino-acid chain: Transcription factor HES-4-B (277 aa).

Residues 1–44 (MPADSMEKPTASPIAGAPANSAQTPDKPKSASEHRKSSKPIMEK) form a disordered region. Positions 26–35 (DKPKSASEHR) are enriched in basic and acidic residues. The bHLH domain maps to 34–91 (HRKSSKPIMEKRRRARINESLGQLKTLILDALKKDSSRHSKLEKADILEMTVKHLRNL). Positions 110–143 (YRAGFNECMNEVTRFLSTCEGVNTEVRTRLLGHL) constitute an Orange domain. The interval 258 to 277 (VSPLGGSTRADSAESVWRPW) is disordered. A WRPW motif motif is present at residues 274–277 (WRPW).

As to quaternary structure, transcription repression requires formation of a complex with a corepressor protein of the Groucho/TLE family. Interacts with the bHLH protein hes6; this interaction may inhibit the transcriptional repressor activity. Binds DNA in the form of a heterodimer with the bHLH protein hey1/hrt1. Interacts (via Orange domain) with id3 (via HLH domain). Dynamically expressed in the borders of several tissue territories. Expressed in the pre-placodal ectoderm (PPE) from gastrula stage. During gastrulation, expressed in the deep layer of the dorsal lip, the Spemann organizer and three distinct regions in the prospective neuroectoderm: neural plate border, presumptive floor plate/notoplate and anterior neural plate. At later stages, expression is localized to the anterior of the prechordal plate, the presomitic mesoderm, neural tube, neural crest derivatives and several tissues of the central nervous system, with expression in the developing floor plate continues to at least the tadpole stage. From the early tailbud stage, expressed in the dorsoanterior region of the developing pronephros. During early tailbud stages, broadly expressed within the pronephric mesoderm. and in the sensorial layer of the ectoderm covering the pronephros anlagen. During late tailbud to early tadpole stages, expressed in the ventral region of the pronephros. Expression remains in the proximal and distal tubules at late tadpole stages (stage 35).

It is found in the nucleus. Functionally, transcriptional repressor. Binds DNA on N-box motifs: 5'-CACNAG-3'. Promotes floor plate development and prechordal plate development. Required for lens development as early as the stage of lens field formation, partly through regulation of gene expression of the cell cycle inhibitor cdknx/p27(xic1). Required for formation of the neural crest downstream of multiple signaling pathways, and acts at the neural plate border via both DNA-binding dependent and independent mechanisms; acts in a DNA-binding dependent manner to repress pro-apoptotic and neural crest differentiation genes, including id3, delta1, and cdknx/p27(xic1), and thus promote the cell survival of neural plate border cells and maintain them in an undifferentiated state. Represses transcription of id3, at least in part through the repression of bmp4. On the other hand, acts in a DNA-independent manner separate from the transcriptional repressor function, to stimulate cell proliferation and promote neural crest formation. Via this DNA-independent route, acts in neurulae upstream of stat3 to transiently up-regulate the notch ligand dll1/delta1, which in turn up-regulates id3 expression. Then interacts directly with id3, which blocks the transcriptional repressor function of hes4-B/hairy2b to allow the progression of neural crest progenitors through specification and differentiation. Also acts via repressor-dependent and repressor-independent mechanisms in early gastrulae to establish the prospective anterior prechordal mesoderm identity in the Spemann organizer; induces specific genes independently from direct transcriptional regulation, and represses the genes specific for neighboring tissues through direct transcriptional repression. Modulates lateral inhibition during notch signaling and regulates the cell context dependent effects of notch (which can have inhibitory, permissive or enhancing roles in muscle or neural differentiation). Inhibits myogenesis. This Xenopus laevis (African clawed frog) protein is Transcription factor HES-4-B (hes4-b).